The sequence spans 671 residues: Phenol 2-monooxygenase (671 aa).

FAD-binding positions include 10–43 (DVLI…RIFD) and 295–305 (LQEGRVFLAGD).

The protein belongs to the PheA/TfdB FAD monooxygenase family. FAD serves as cofactor.

It is found in the cytoplasm. It carries out the reaction phenol + NADPH + O2 + H(+) = catechol + NADP(+) + H2O. Its pathway is aromatic compound metabolism; phenol degradation. In terms of biological role, hydroxylates phenol to catechol. Also acts on cresols. In Ralstonia pickettii (Burkholderia pickettii), this protein is Phenol 2-monooxygenase (tbuD).